A 242-amino-acid chain; its full sequence is Transcriptional activator protein RaiR (242 aa).

One can recognise an HTH luxR-type domain in the interval 177 to 242; it reads KVADLPRLSR…EQLLGPRRSN (66 aa). The H-T-H motif DNA-binding region spans 201 to 220; the sequence is AKQICARLSISVSAVQLYLA.

The protein belongs to the autoinducer-regulated transcriptional regulatory protein family.

The sequence is that of Transcriptional activator protein RaiR (raiR) from Rhizobium etli.